Consider the following 373-residue polypeptide: Ferroptosis suppressor protein 1 (373 aa).

Gly2 is lipidated: N-myristoyl glycine. Residues Val7–Ala27 form a helical membrane-spanning segment. Residues Gly18 to Gly22, Arg54, and Val82 contribute to the 6-hydroxy-FAD site. Residue Lys168 is modified to N6-acetyllysine. Asp285 is a 6-hydroxy-FAD binding site.

It belongs to the FAD-dependent oxidoreductase family. In terms of assembly, interacts with importin subunits KPNA2 and IPO5; this interaction likely mediates the translocation into the nucleus upon oxidative stress. 6-hydroxy-FAD serves as cofactor. In terms of processing, N-myristoylation at Gly-2 mediates the recruitment to lipid droplets and plasma membrane. Post-translationally, acetylation at Lys-168 prevents AIFM2 ubiquitination and degradation, thereby inhibiting ferroptosis. KAT2B mediates acetylation at Lys-168, while HDAC3 removes it. Ubiquitinated. AIFM2 undergoes 'Lys-29'-ubiquitination and proteasomal degradation, which is inhibited by acetylation at Lys-168. Detected in most normal tissues as two transcripts of 1.8 and 4.0 kb in length, respectively. Highly expressed in liver, testis, and kidney, and expressed at lower levels in pancreas, spleen, brain and lung. Expressed in heart (at protein level).

Its subcellular location is the lipid droplet. It localises to the cell membrane. It is found in the cytoplasm. The protein resides in the mitochondrion membrane. The protein localises to the nucleus. The enzyme catalyses ubiquinone-10 + NADH + H(+) = ubiquinol-10 + NAD(+). It carries out the reaction phylloquinone + NADH + H(+) = phylloquinol + NAD(+). It catalyses the reaction menaquinone-4 + NADH + H(+) = menaquinol-4 + NAD(+). The catalysed reaction is menadione + NADH + H(+) = menadiol + NAD(+). With respect to regulation, the modification by 4-hydroxy-2-nonenal (HNE) adduction in mitochondria results in loss of the oxidoreductase activity and activation of a novel function in mitochondrial oxidative stress signaling. Its function is as follows. An NAD(P)H-dependent oxidoreductase that acts as a key inhibitor of ferroptosis. At the plasma membrane, catalyzes reduction of coenzyme Q/ubiquinone-10 to ubiquinol-10, a lipophilic radical-trapping antioxidant that prevents lipid oxidative damage and consequently ferroptosis. Acts in parallel to GPX4 to suppress phospholipid peroxidation and ferroptosis. This anti-ferroptotic function is independent of cellular glutathione levels. Also acts as a potent radical-trapping antioxidant by mediating warfarin-resistant vitamin K reduction in the canonical vitamin K cycle: catalyzes NAD(P)H-dependent reduction of vitamin K (phylloquinone, menaquinone-4 and menadione) to hydroquinone forms. Hydroquinones act as potent radical-trapping antioxidants inhibitor of phospholipid peroxidation and ferroptosis. May play a role in mitochondrial stress signaling. Upon oxidative stress, associates with the lipid peroxidation end product 4-hydroxy-2-nonenal (HNE) forming a lipid adduct devoid of oxidoreductase activity, which then translocates from mitochondria into the nucleus triggering DNA damage and cell death. The polypeptide is Ferroptosis suppressor protein 1 (Mus musculus (Mouse)).